Consider the following 298-residue polypeptide: Junctional adhesion molecule B (298 aa).

An N-terminal signal peptide occupies residues 1-28 (MARRSRHRLLLLLLRYLVVALGYHKAYG). At 29-238 (FSAPKDQQVV…RMQVDDLNIS (210 aa)) the chain is on the extracellular side. The 96-residue stretch at 32–127 (PKDQQVVTAV…GQNLEEDTVT (96 aa)) folds into the Ig-like V-type domain. 2 cysteine pairs are disulfide-bonded: Cys-50–Cys-109 and Cys-155–Cys-214. Residues Asn-98, Asn-187, and Asn-236 are each glycosylated (N-linked (GlcNAc...) asparagine). The Ig-like C2-type domain occupies 134–238 (PAVPSCEVPS…RMQVDDLNIS (105 aa)). The chain crosses the membrane as a helical span at residues 239–259 (GIIAAVVVVALVISVCGLGVC). Residues 260 to 298 (YAQRKGYFSKETSFQKSNSSSKATTMSENDFKHTKSFII) lie on the Cytoplasmic side of the membrane.

The protein belongs to the immunoglobulin superfamily. Highly expressed in heart, placenta, lung, foreskin and lymph node. Prominently expressed on high endothelial venules and also present on the endothelia of other vessels (at protein level). Also expressed in the brain in the caudate nuclei.

The protein resides in the cell membrane. It localises to the cell junction. Its subcellular location is the tight junction. Functionally, junctional adhesion protein that mediates heterotypic cell-cell interactions with its cognate receptor JAM3 to regulate different cellular processes. Plays a role in homing and mobilization of hematopoietic stem and progenitor cells within the bone marrow. At the surface of bone marrow stromal cells, it contributes to the retention of the hematopoietic stem and progenitor cells expressing JAM3. Plays a central role in leukocytes extravasation by facilitating not only transmigration but also tethering and rolling of leukocytes along the endothelium. Tethering and rolling of leukocytes are dependent on the binding by JAM2 of the integrin alpha-4/beta-1. Plays a role in spermatogenesis where JAM2 and JAM3, which are respectively expressed by Sertoli and germ cells, mediate an interaction between both cell types and play an essential role in the anchorage of germ cells onto Sertoli cells and the assembly of cell polarity complexes during spermatid differentiation. Also functions as an inhibitory somatodendritic cue that prevents the myelination of non-axonal parts of neurons. During myogenesis, it is involved in myocyte fusion. May also play a role in angiogenesis. This is Junctional adhesion molecule B from Homo sapiens (Human).